Consider the following 183-residue polypeptide: MMAFPPQSCVHVLPPKSIQMWEPNHNTMHGSSQSPRNYRVHDSQQMVWVLTGNTLTAVPASNNVKPVILSLIACRDTEFQDVKKGNLVFLGIKNRNLCFCCVEMEGKPTLQLKEVDIMNLYKERKAQKAFLFYHGIEGSTSVFQSVLYPGWFIATSSIERQTIILTHQRGKLVNTNFYIESEK.

Positions 1 to 30 (MMAFPPQSCVHVLPPKSIQMWEPNHNTMHG) are excised as a propeptide.

Belongs to the IL-1 family. In terms of assembly, interacts with cargo receptor TMED10; the interaction mediates the translocation from the cytoplasm into the ERGIC (endoplasmic reticulum-Golgi intermediate compartment) and thereby secretion. N-terminal truncation leads to a dramatic enhancement of its activity (&gt;1000-fold).

Its subcellular location is the cytoplasm. It localises to the secreted. Its function is as follows. Cytokine that binds to and signals through the IL1RL2/IL-36R receptor which in turn activates NF-kappa-B and MAPK signaling pathways in target cells linked to a pro-inflammatory response. Part of the IL-36 signaling system that is thought to be present in epithelial barriers and to take part in local inflammatory response; similar to the IL-1 system with which it shares the coreceptor IL1RAP. Stimulates production of interleukin-6 and interleukin-8 in synovial fibrobasts, articular chondrocytes and mature adipocytes. Induces expression of a number of antimicrobial peptides including beta-defensin 4 and beta-defensin 103 as well as a number of matrix metalloproteases. Seems to be involved in skin inflammatory response by acting on keratinocytes, dendritic cells and indirectly on T-cells to drive tissue infiltration, cell maturation and cell proliferation. Induces the production of pro-inflammatory cytokines in bone marrow-derived dendritic cells (BMDCs), including IL-12, Il-1 beta, IL-6, TNF-alpha and IL-23, and activates p38 MAPK phosphorylation in BMDCs. Involved in dendritic cell maturation by stimulating the surface expression of CD80, CD86 and MHC class II. Induces the production of IFN-gamma, IL-4 and IL-17 by T-helper 1 (Th1) cells, cultured CD4(+) T-cells and splenocytes. The protein is Interleukin-36 beta of Mus musculus (Mouse).